The following is a 472-amino-acid chain: Uronate isomerase (472 aa).

The protein belongs to the metallo-dependent hydrolases superfamily. Uronate isomerase family.

The catalysed reaction is D-glucuronate = D-fructuronate. The enzyme catalyses aldehydo-D-galacturonate = keto-D-tagaturonate. It functions in the pathway carbohydrate metabolism; pentose and glucuronate interconversion. In Opitutus terrae (strain DSM 11246 / JCM 15787 / PB90-1), this protein is Uronate isomerase.